We begin with the raw amino-acid sequence, 538 residues long: Syncytin-1 (538 aa).

An N-terminal signal peptide occupies residues 1–20 (MALPYHIFLFTVLLPSFTLT). At 31 to 443 (SSPYQEFLWR…NIGPWGLLSQ (413 aa)) the chain is on the extracellular side. A glycan (N-linked (GlcNAc...) asparagine) is linked at N169. The CXXC motif lies at 186–189 (CWMC). Disulfide bonds link C186/C189, C186/C405, and C397/C404. N-linked (GlcNAc...) asparagine glycosylation is found at N208, N214, N234, N242, and N281. Residues 320–340 (ILPFVMGAGVLGALGTGIGSI) form a fusion peptide region. The segment at 380-396 (LQNRRALDLLTAERGGT) is immunosuppression. The CX6CC signature appears at 397–405 (CLFLGEECC). A glycan (N-linked (GlcNAc...) asparagine) is linked at N409. Residues 444–464 (WMPWILPFLGPLAAIILLLLF) form a helical membrane-spanning segment. Positions 465-484 (GPCIFNLLVNFVSSRIEAIK) are essential for the fusiogenic function. Topologically, residues 465–538 (GPCIFNLLVN…LLRPNSAGSS (74 aa)) are cytoplasmic. Positions 494–538 (KTKNYRRSLDWPASPRSDVNDIKGIPPEEISTAQPLLRPNSAGSS) are disordered.

This sequence belongs to the gamma type-C retroviral envelope protein family. HERV class-I W env subfamily. As to quaternary structure, the mature envelope protein (Env) consists of a trimer of SU-TM heterodimers attached probably by a labile interchain disulfide bond. Interacts with the C-type lectin CD209/DC-SIGN. Post-translationally, specific enzymatic cleavages in vivo yield mature proteins. Envelope glycoproteins are synthesized as an inactive precursor that is heavily N-glycosylated and processed likely by furin in the Golgi to yield the mature SU and TM proteins. The cleavage site between SU and TM requires the minimal sequence [KR]-X-[KR]-R. In terms of processing, the CXXC motif is highly conserved across a broad range of retroviral envelope proteins. It is thought to participate in the formation of a labile disulfide bond possibly with the CX6CC motif present in the transmembrane protein.

The protein resides in the cell membrane. It localises to the virion. Functionally, this endogenous retroviral envelope protein has retained its original fusogenic properties and participates in trophoblast fusion and the formation of a syncytium during placenta morphogenesis. May recognize and induce fusion through binding of SLC1A4 and SLC1A5. Its function is as follows. Endogenous envelope proteins may have kept, lost or modified their original function during evolution. Retroviral envelope proteins mediate receptor recognition and membrane fusion during early infection. The surface protein (SU) mediates receptor recognition, while the transmembrane protein (TM) acts as a class I viral fusion protein. The protein may have at least 3 conformational states: pre-fusion native state, pre-hairpin intermediate state, and post-fusion hairpin state. During viral and target cell membrane fusion, the coiled coil regions (heptad repeats) assume a trimer-of-hairpins structure, positioning the fusion peptide in close proximity to the C-terminal region of the ectodomain. The formation of this structure appears to drive apposition and subsequent fusion of membranes. The protein is Syncytin-1 (ERVW-1) of Hylobates pileatus (Pileated gibbon).